The sequence spans 258 residues: Large ribosomal subunit protein uL15c (258 aa).

The N-terminal 65 residues, 1-65, are a transit peptide targeting the chloroplast; it reads MSAASLIPVS…NVKSSGENVR (65 aa). The interval 67 to 90 is disordered; the sequence is RLDNLGPQPGSRKRPKRKGRGIAA. The span at 77–86 shows a compositional bias: basic residues; it reads SRKRPKRKGR.

The protein belongs to the universal ribosomal protein uL15 family. In terms of assembly, part of the 50S ribosomal subunit.

The protein localises to the plastid. The protein resides in the chloroplast. In Pisum sativum (Garden pea), this protein is Large ribosomal subunit protein uL15c (RPL15).